Consider the following 458-residue polypeptide: Tyrosine phenol-lyase (458 aa).

Lys-258 carries the N6-(pyridoxal phosphate)lysine modification.

It belongs to the beta-eliminating lyase family. As to quaternary structure, homotetramer. Requires pyridoxal 5'-phosphate as cofactor.

The enzyme catalyses L-tyrosine + H2O = phenol + pyruvate + NH4(+). The chain is Tyrosine phenol-lyase (tpl) from Symbiobacterium sp. (strain SC-1).